The sequence spans 326 residues: Tagatose 1,6-diphosphate aldolase (326 aa).

It belongs to the aldolase LacD family.

It catalyses the reaction D-tagatofuranose 1,6-bisphosphate = D-glyceraldehyde 3-phosphate + dihydroxyacetone phosphate. Its pathway is carbohydrate metabolism; D-tagatose 6-phosphate degradation; D-glyceraldehyde 3-phosphate and glycerone phosphate from D-tagatose 6-phosphate: step 2/2. The chain is Tagatose 1,6-diphosphate aldolase from Streptococcus pneumoniae serotype 4 (strain ATCC BAA-334 / TIGR4).